The chain runs to 424 residues: Gamma-glutamyl phosphate reductase (424 aa).

Belongs to the gamma-glutamyl phosphate reductase family.

It localises to the cytoplasm. It carries out the reaction L-glutamate 5-semialdehyde + phosphate + NADP(+) = L-glutamyl 5-phosphate + NADPH + H(+). The protein operates within amino-acid biosynthesis; L-proline biosynthesis; L-glutamate 5-semialdehyde from L-glutamate: step 2/2. Functionally, catalyzes the NADPH-dependent reduction of L-glutamate 5-phosphate into L-glutamate 5-semialdehyde and phosphate. The product spontaneously undergoes cyclization to form 1-pyrroline-5-carboxylate. The polypeptide is Gamma-glutamyl phosphate reductase (Shewanella sediminis (strain HAW-EB3)).